The primary structure comprises 393 residues: Squamosa promoter-binding-like protein 17 (393 aa).

Positions 40–49 are enriched in low complexity; the sequence is AAAVESSSTS. The segment at 40-67 is disordered; the sequence is AAAVESSSTSSGGGGKKGKGVAAAAAPP. The SBP-type zinc finger occupies 71-148; sequence PPRCQVEGCG…AGHNERRRKP (78 aa). 8 residues coordinate Zn(2+): Cys74, Cys79, Cys96, His99, Cys115, Cys118, His122, and Cys134. The Bipartite nuclear localization signal signature appears at 131-147; the sequence is KKSCRRRLAGHNERRRK. The segment covering 137–148 has biased composition (basic residues); the sequence is RLAGHNERRRKP. Disordered stretches follow at residues 137-158, 273-301, and 317-393; these read RLAGHNERRRKPTPGPLSSRYG, WDTTQSTSSHNRSPPMSSTASAFGGGNNP, and GWNS…NWSL. Polar residues-rich tracts occupy residues 273–293 and 380–393; these read WDTTQSTSSHNRSPPMSSTAS and GAFSHSTNAMNWSL.

In terms of tissue distribution, expressed in young panicles.

It is found in the nucleus. Its function is as follows. Trans-acting factor that binds specifically to the consensus nucleotide sequence 5'-TNCGTACAA-3'. May be involved in panicle development. The sequence is that of Squamosa promoter-binding-like protein 17 (SPL17) from Oryza sativa subsp. japonica (Rice).